Reading from the N-terminus, the 410-residue chain is Large ribosomal subunit protein uL4 (410 aa).

This sequence belongs to the universal ribosomal protein uL4 family.

It localises to the cytoplasm. This chain is Large ribosomal subunit protein uL4 (RPL4), found in Tetrahymena thermophila (strain SB210).